Consider the following 1407-residue polypeptide: DNA-directed RNA polymerase subunit beta' (1407 aa).

Zn(2+)-binding residues include C70, C72, C85, and C88. D460, D462, and D464 together coordinate Mg(2+). The Zn(2+) site is built by C814, C888, C895, and C898.

It belongs to the RNA polymerase beta' chain family. In terms of assembly, the RNAP catalytic core consists of 2 alpha, 1 beta, 1 beta' and 1 omega subunit. When a sigma factor is associated with the core the holoenzyme is formed, which can initiate transcription. Mg(2+) serves as cofactor. It depends on Zn(2+) as a cofactor.

It catalyses the reaction RNA(n) + a ribonucleoside 5'-triphosphate = RNA(n+1) + diphosphate. In terms of biological role, DNA-dependent RNA polymerase catalyzes the transcription of DNA into RNA using the four ribonucleoside triphosphates as substrates. This Salmonella choleraesuis (strain SC-B67) protein is DNA-directed RNA polymerase subunit beta'.